A 174-amino-acid chain; its full sequence is Peptide methionine sulfoxide reductase MsrA (174 aa).

Cys-10 is an active-site residue.

Belongs to the MsrA Met sulfoxide reductase family.

The catalysed reaction is L-methionyl-[protein] + [thioredoxin]-disulfide + H2O = L-methionyl-(S)-S-oxide-[protein] + [thioredoxin]-dithiol. The enzyme catalyses [thioredoxin]-disulfide + L-methionine + H2O = L-methionine (S)-S-oxide + [thioredoxin]-dithiol. Functionally, has an important function as a repair enzyme for proteins that have been inactivated by oxidation. Catalyzes the reversible oxidation-reduction of methionine sulfoxide in proteins to methionine. In Pseudarthrobacter chlorophenolicus (strain ATCC 700700 / DSM 12829 / CIP 107037 / JCM 12360 / KCTC 9906 / NCIMB 13794 / A6) (Arthrobacter chlorophenolicus), this protein is Peptide methionine sulfoxide reductase MsrA.